The sequence spans 101 residues: MKEQKIRVKLKAFDIELIDQSAQSIVASVKKTGARVSGPIPLPTSIRKVTVIRSPHVNIKSREQFEMRIYKRLIDIFDVTPQTTESLKKLALPAGVDVQLK.

Belongs to the universal ribosomal protein uS10 family. As to quaternary structure, part of the 30S ribosomal subunit.

Its function is as follows. Involved in the binding of tRNA to the ribosomes. This Brachyspira hyodysenteriae (Treponema hyodysenteriae) protein is Small ribosomal subunit protein uS10.